The chain runs to 981 residues: Ubiquitin carboxyl-terminal hydrolase 37 (981 aa).

The KEN box 1 signature appears at 32-34 (KEN). Short sequence motifs (D-box) lie at residues 71 to 79 (RLMLTLQDN) and 96 to 105 (RLFLDAVHQN). The interval 111–308 (MKPSQGSGSF…SAKRSLGFLP (198 aa)) is disordered. Position 114 is a phosphoserine (Ser114). Over residues 135–148 (RQLSYSDNQASSKR) the composition is skewed to polar residues. Basic and acidic residues predominate over residues 149–159 (GSLETKDDIPF). A D-box 3 motif is present at residues 160-168 (RKVLGNPGR). A Phosphoserine modification is found at Ser170. The span at 172-195 (KTATGSGITVTRTIPSLTSASTPL) shows a compositional bias: polar residues. The residue at position 212 (Ser212) is a Phosphoserine. The short motif at 223 to 225 (KEN) is the KEN box 2 element. Residues 245–259 (SREKQLSLKQSEENR) show a composition bias toward basic and acidic residues. The span at 266–300 (LQSSSFYGSRTGSKDYSSGSTNLDRTNVSGQTPSA) shows a compositional bias: polar residues. The 611-residue stretch at 343–953 (QGFSNLGNTC…SGYIFFYMHK (611 aa)) folds into the USP domain. Cys352 (nucleophile) is an active-site residue. At Ser630 the chain carries Phosphoserine; by CDK2. Ser652 and Ser654 each carry phosphoserine. 2 disordered regions span residues 673–704 (GCEQ…GFDG) and 719–831 (KREA…EQKE). Composition is skewed to basic and acidic residues over residues 683–697 (KDSK…KSEL) and 719–734 (KREA…DDKP). A UIM 1 domain is found at 706 to 725 (SEEELLAAVLEMSKREASPT). Ser772 is modified (phosphoserine). Positions 776 to 788 (ITKDCDENKENKT) are enriched in basic and acidic residues. The KEN box 3 motif lies at 784–786 (KEN). 2 UIM domains span residues 808–827 (REEQ…QEAW) and 830–849 (KEDD…FNNS). The segment covering 813-824 (LQQALAQSLQEQ) has biased composition (low complexity). Residue His908 is the Proton acceptor of the active site.

The protein belongs to the peptidase C19 family. Interacts with FZR1/CDH1. Interacts with CDT1. Polyubiquitinated via 'Lys-11'-linked ubiquitin by the APC(CDH1) complex during late mitosis, leading to its degradation. Able to mediate auto-deubiquitination. In terms of processing, phosphorylated at Ser-630 by CDK2 during G1/S phase but not during mitosis; phosphorylation at Ser-630 is required for deubiquitinase activity. Also polyubiquitinated during early G1 phase, without leading to degradation. Phosphorylated at Ser-114 by ATM following DNA damage, which in turn increases its deubiquitination activity towards BLM.

It is found in the nucleus. Its subcellular location is the chromosome. The catalysed reaction is Thiol-dependent hydrolysis of ester, thioester, amide, peptide and isopeptide bonds formed by the C-terminal Gly of ubiquitin (a 76-residue protein attached to proteins as an intracellular targeting signal).. In terms of biological role, deubiquitinase that plays a role in different processes including cell cycle regulation, DNA replication or DNA damage response. Antagonizes the anaphase-promoting complex (APC/C) during G1/S transition by mediating deubiquitination of cyclin-A (CCNA1 and CCNA2), thereby promoting S phase entry. Specifically mediates deubiquitination of 'Lys-11'-linked polyubiquitin chains, a specific ubiquitin-linkage type mediated by the APC/C complex. Phosphorylation at Ser-628 during G1/S phase maximizes the deubiquitinase activity, leading to prevent degradation of cyclin-A (CCNA1 and CCNA2). Plays an important role in the regulation of DNA replication by stabilizing the licensing factor CDT1. Also plays an essential role beyond S-phase entry to promote the efficiency and fidelity of replication by deubiquitinating checkpoint kinase 1/CHK1, promoting its stability. Sustains the DNA damage response (DDR) by deubiquitinating and stabilizing the ATP-dependent DNA helicase BLM. Mechanistically, DNA double-strand breaks (DSB) promotes ATM-mediated phosphorylation of USP37 and enhances the binding between USP37 and BLM. Promotes cell migration by deubiquitinating and stabilizing the epithelial-mesenchymal transition (EMT)-inducing transcription factor SNAI. Plays a role in the regulation of mitotic spindle assembly and mitotic progression by associating with chromatin-associated WAPL and stabilizing it through deubiquitination. In Canis lupus familiaris (Dog), this protein is Ubiquitin carboxyl-terminal hydrolase 37 (USP37).